The sequence spans 493 residues: Isoniazid-induced protein IniC (493 aa).

This chain is Isoniazid-induced protein IniC (iniC), found in Mycobacterium tuberculosis (strain CDC 1551 / Oshkosh).